The chain runs to 299 residues: Probable lipid kinase YegS-like (299 aa).

A DAGKc domain is found at 2–133 (ATFPASLLIL…IDIAQVNDKT (132 aa)). ATP-binding positions include threonine 40, 66-72 (GDGTINE), and threonine 95. Leucine 215, aspartate 218, and leucine 220 together coordinate Mg(2+). The active-site Proton acceptor is glutamate 271.

Belongs to the diacylglycerol/lipid kinase family. YegS lipid kinase subfamily. It depends on Mg(2+) as a cofactor. The cofactor is Ca(2+).

It localises to the cytoplasm. Its function is as follows. Probably phosphorylates lipids; the in vivo substrate is unknown. In Citrobacter koseri (strain ATCC BAA-895 / CDC 4225-83 / SGSC4696), this protein is Probable lipid kinase YegS-like.